The chain runs to 684 residues: Threonine--tRNA ligase (684 aa).

A TGS domain is found at 1-66; the sequence is MSTAASPAPA…DADVEVVPVP (66 aa). Residues 261–567 form a catalytic region; the sequence is DHRKLGVELD…LTEHYAGAFP (307 aa). Zn(2+) is bound by residues C366, H417, and H544.

The protein belongs to the class-II aminoacyl-tRNA synthetase family. In terms of assembly, homodimer. The cofactor is Zn(2+).

Its subcellular location is the cytoplasm. The catalysed reaction is tRNA(Thr) + L-threonine + ATP = L-threonyl-tRNA(Thr) + AMP + diphosphate + H(+). Catalyzes the attachment of threonine to tRNA(Thr) in a two-step reaction: L-threonine is first activated by ATP to form Thr-AMP and then transferred to the acceptor end of tRNA(Thr). Also edits incorrectly charged L-seryl-tRNA(Thr). This is Threonine--tRNA ligase from Mycobacterium sp. (strain KMS).